The sequence spans 680 residues: DNA ligase (680 aa).

NAD(+) is bound by residues 35-39 (DADFD), 86-87 (SL), and E111. The active-site N6-AMP-lysine intermediate is K113. 4 residues coordinate NAD(+): R134, E174, K290, and K314. Positions 408, 411, 427, and 433 each coordinate Zn(2+). One can recognise a BRCT domain in the interval 597 to 680 (VAEQTLEGLT…RLLNTGSADE (84 aa)).

This sequence belongs to the NAD-dependent DNA ligase family. LigA subfamily. The cofactor is Mg(2+). Mn(2+) serves as cofactor.

It carries out the reaction NAD(+) + (deoxyribonucleotide)n-3'-hydroxyl + 5'-phospho-(deoxyribonucleotide)m = (deoxyribonucleotide)n+m + AMP + beta-nicotinamide D-nucleotide.. Its function is as follows. DNA ligase that catalyzes the formation of phosphodiester linkages between 5'-phosphoryl and 3'-hydroxyl groups in double-stranded DNA using NAD as a coenzyme and as the energy source for the reaction. It is essential for DNA replication and repair of damaged DNA. This is DNA ligase from Corynebacterium glutamicum (strain R).